The following is a 348-amino-acid chain: Rhodopsin (348 aa).

Met-1 carries the N-acetylmethionine modification. The Extracellular segment spans residues Met-1 to Gln-36. N-linked (GlcNAc...) asparagine glycans are attached at residues Asn-2 and Asn-15. A helical membrane pass occupies residues Phe-37–Val-61. The Cytoplasmic segment spans residues Thr-62–Asn-73. Residues Tyr-74 to Tyr-96 traverse the membrane as a helical segment. At Thr-97–Cys-110 the chain is on the extracellular side. A disulfide bond links Cys-110 and Cys-187. The chain crosses the membrane as a helical span at residues Asn-111–Ile-133. The 'Ionic lock' involved in activated form stabilization motif lies at Glu-134–Tyr-136. The Cytoplasmic portion of the chain corresponds to Glu-134 to His-152. A helical membrane pass occupies residues Ala-153–Val-173. Residues Gly-174–Ser-202 are Extracellular-facing. Glu-201 is a binding site for Zn(2+). The chain crosses the membrane as a helical span at residues Phe-203–Gly-224. Residues Gln-225–Arg-252 lie on the Cytoplasmic side of the membrane. The chain crosses the membrane as a helical span at residues Met-253–Tyr-274. Residues Ile-275 to Ile-286 are Extracellular-facing. Residue Gln-279 participates in Zn(2+) binding. Residues Phe-287 to Met-308 traverse the membrane as a helical segment. Position 296 is an N6-(retinylidene)lysine (Lys-296). The Cytoplasmic portion of the chain corresponds to Met-309–Ala-348. S-palmitoyl cysteine attachment occurs at residues Cys-322 and Cys-323. Residues Asp-330–Ala-348 form an interaction with SAG region. The residue at position 334 (Ser-334) is a Phosphoserine. Ser-334 carries the phosphoserine; by RK and GRK7 modification. Phosphothreonine is present on residues Thr-335 and Thr-336. Phosphothreonine; by RK and GRK7 occurs at positions 335 and 336. Ser-338 is modified (phosphoserine; by RK and GRK7). A phosphothreonine mark is found at Thr-340 and Thr-342. Residue Ser-343 is modified to Phosphoserine; by RK and GRK7.

Belongs to the G-protein coupled receptor 1 family. Opsin subfamily. In terms of assembly, homodimer. May form a complex composed of RHO, GRK1 and RCVRN in a Ca(2+)-dependent manner; RCVRN prevents the interaction between GRK1 and RHO. Interacts with GRK1. Interacts (phosphorylated form) with SAG. Interacts with GNAT1. Interacts with GNAT3. SAG and G-proteins compete for a common binding site. Interacts with PRCD; the interaction promotes PRCD stability. Forms a complex with ASAP1 and ARF4. Forms a complex with ASAP1, RAB11A, Rabin8/RAB3IP, ARF4 and RAB11FIP3; the complex regulates Golgi-to-cilia rhodopsin/RHO transport in photoreceptors. Phosphorylated on some or all of the serine and threonine residues present in the C-terminal region. Post-translationally, contains one covalently linked retinal chromophore. Upon light absorption, the covalently bound 11-cis-retinal is converted to all-trans-retinal. After hydrolysis of the Schiff base and release of the covalently bound all-trans-retinal, active rhodopsin is regenerated by binding of a fresh molecule of 11-cis-retinal.

It localises to the membrane. The protein resides in the cell projection. The protein localises to the cilium. Its subcellular location is the photoreceptor outer segment. Its function is as follows. Photoreceptor required for image-forming vision at low light intensity. Required for photoreceptor cell viability after birth. Light-induced isomerization of 11-cis to all-trans retinal triggers a conformational change that activates signaling via G-proteins. Subsequent receptor phosphorylation mediates displacement of the bound G-protein alpha subunit by the arrestin SAG and terminates signaling. The polypeptide is Rhodopsin (RHO) (Ovis aries (Sheep)).